The primary structure comprises 166 residues: Cyanate hydratase (166 aa).

Active-site residues include arginine 92, glutamate 95, and serine 118.

Belongs to the cyanase family.

The enzyme catalyses cyanate + hydrogencarbonate + 3 H(+) = NH4(+) + 2 CO2. Functionally, catalyzes the reaction of cyanate with bicarbonate to produce ammonia and carbon dioxide. The sequence is that of Cyanate hydratase from Zea mays (Maize).